Here is a 138-residue protein sequence, read N- to C-terminus: MSEFTIVQNKEDLIDAIKSKLSEGYKESEMTVISKTKLHIDALHDSEVNLTATSGSFSDKMAKILTGEDGEEAVLAHYKLPEEELERYKKEILNDNYLVVATKDTTSHVEADKANVAFETNQTKSNSHYSEETNGPKS.

Positions 115-138 (NVAFETNQTKSNSHYSEETNGPKS) are disordered. Over residues 118–138 (FETNQTKSNSHYSEETNGPKS) the composition is skewed to polar residues.

This sequence belongs to the UPF0355 family.

The protein is UPF0355 protein SSP2326 of Staphylococcus saprophyticus subsp. saprophyticus (strain ATCC 15305 / DSM 20229 / NCIMB 8711 / NCTC 7292 / S-41).